We begin with the raw amino-acid sequence, 2453 residues long: Nuclear receptor corepressor 1 (2453 aa).

Positions 1 to 29 are enriched in polar residues; it reads MSSSGYPPNQGAFSTEQSRYPSHSVQYTF. 3 disordered regions span residues 1 to 116, 147 to 177, and 206 to 231; these read MSSS…QVSD, PAFG…SKLS, and QQQL…VEQK. The segment at 1–373 is interaction with ZBTB33 and HEXIM1; it reads MSSSGYPPNQ…QRGAGLSATI (373 aa). The span at 51–64 shows a compositional bias: low complexity; that stretch reads SQASQLLQQQQQQQ. Basic and acidic residues-rich tracts occupy residues 77–88 and 99–116; these read PGSDRPQERRSG and VDHD…QVSD. Ser172 bears the Phosphoserine mark. Residues 174–216 adopt a coiled-coil conformation; it reads SKLSKEELIQSMDRVDREIAKVEQQILKLKKKQQQLEEEAAKP. Positions 212-221 are enriched in basic and acidic residues; the sequence is EAAKPPEPEK. Ser224 carries the post-translational modification Phosphoserine. Residues 254-312 form an interaction with SIN3A/B region; sequence FEGLGPKVELPLYNQPSDTKVYHENIKTNQVMRKKLILFFKRRNHARKQREQKICQRYD. A coiled-coil region spans residues 299-328; sequence ARKQREQKICQRYDQLMEAWEKKVDRIENN. Positions 435–486 constitute an SANT 1 domain; that stretch reads QFMNVWTDHEKEIFKDKFIQHPKNFGLIASYLERKSVPDCVLYYYLTKKNEN. Disordered stretches follow at residues 497–631 and 677–908; these read KRRG…TEEE and LLQQ…PERQ. Residues 501–550 adopt a coiled-coil conformation; sequence RNQQIARPSQEEKVEEKEEDKAEKTEKKEEEKKDDEEKDDKEDSKETTKE. Composition is skewed to basic and acidic residues over residues 509-531 and 541-556; these read SQEE…KEEE and KEDS…RTEA. Over residues 592–604 the composition is skewed to low complexity; sequence EAAAANAAAAATE. The span at 605–616 shows a compositional bias: pro residues; that stretch reads EPPPPLPPPPEP. One can recognise an SANT 2 domain in the interval 622 to 673; that stretch reads VETSRWTEEEMEVAKKGLVEHGRNWAAIAKMVGTKSEAQCKNFYFNYKRRHN. A compositionally biased stretch (polar residues) spans 697 to 707; that stretch reads QCESVASTVSA. Acidic residues predominate over residues 708 to 727; the sequence is QEDEDIEASNEEENPEDSEG. A compositionally biased stretch (low complexity) spans 771-787; it reads TTDPAPCASPSSAVPTT. Positions 851 to 885 are enriched in basic and acidic residues; that stretch reads GEGDAKERDLESTSEKTEARDEDVVVAEQIERPEP. The residue at position 1011 (Ser1011) is a Phosphoserine. A disordered region spans residues 1034 to 1058; it reads VRLPTTRPTRPPPPLIPSSKTTVAS. Lys1117 is covalently cross-linked (Glycyl lysine isopeptide (Lys-Gly) (interchain with G-Cter in SUMO1); alternate). Lys1117 is covalently cross-linked (Glycyl lysine isopeptide (Lys-Gly) (interchain with G-Cter in SUMO2); alternate). Residue Ser1122 is modified to Phosphoserine. Residue Lys1195 forms a Glycyl lysine isopeptide (Lys-Gly) (interchain with G-Cter in SUMO2) linkage. 5 positions are modified to phosphoserine: Ser1206, Ser1207, Ser1274, Ser1292, and Ser1333. Lys1347 is subject to N6-acetyllysine. Thr1378 carries the phosphothreonine modification. A Glycyl lysine isopeptide (Lys-Gly) (interchain with G-Cter in SUMO2) cross-link involves residue Lys1400. Lys1423 is covalently cross-linked (Glycyl lysine isopeptide (Lys-Gly) (interchain with G-Cter in SUMO2); alternate). Lys1423 carries the post-translational modification N6-acetyllysine; alternate. A disordered region spans residues 1450-1544; the sequence is GEPVRARHTS…SIPAKSPVPG (95 aa). Residues Ser1459 and Ser1481 each carry the phosphoserine modification. Residues 1459 to 1469 show a composition bias toward polar residues; that stretch reads SVVSSGPSVLR. Positions 1495–1514 are enriched in polar residues; that stretch reads VSYQNTISRGSPMMNRTSDV. The segment at 1510 to 2453 is interaction with C1D; the sequence is RTSDVSSSKS…QYETLSDSDD (944 aa). A Glycyl lysine isopeptide (Lys-Gly) (interchain with G-Cter in SUMO2) cross-link involves residue Lys1525. At Ser1598 the chain carries Phosphoserine. Disordered stretches follow at residues 1697 to 1780 and 1902 to 1939; these read RPYN…VRTQ and ALPS…RTRG. 2 stretches are compositionally biased toward basic and acidic residues: residues 1718–1745 and 1919–1937; these read AERE…RERI and AGKD…ELRT. The CORNR box 1 signature appears at 1949 to 1953; sequence IDVII. The tract at residues 1959-2060 is disordered; the sequence is SDKDARERGS…SSQSEGMGQV (102 aa). Residues 1968–1979 show a composition bias toward low complexity; sequence SQSSDSSSSLSS. A phosphoserine mark is found at Ser1993 and Ser1997. The interval 2050-2129 is ID1; the sequence is PSSQSEGMGQ…QSQTVLHPRP (80 aa). The segment at 2065-2068 is required for interaction with RARA in the absence of its ligand; that stretch reads RLIT. Residues 2073-2077 carry the CORNR box 2 motif; it reads ICQII. Positions 2088-2124 are enriched in polar residues; that stretch reads SQASTSTFQTSPSALSSTPVRTKTSSRYSPESQSQTV. Positions 2088 to 2174 are disordered; that stretch reads SQASTSTFQT…SPPQGPAVHE (87 aa). 5 positions are modified to phosphoserine: Ser2116, Ser2134, Ser2150, Ser2165, and Ser2198. Residues 2138–2156 are compositionally biased toward basic and acidic residues; the sequence is LVDKSRGSRPGKSPERSHI. Residues 2226-2287 form an ID2 region; that stretch reads IFRKLNSSGG…EDIIRKALMG (62 aa). Residues 2277–2281 carry the CORNR box 3 motif; sequence LEDII. Residues 2303 to 2396 are disordered; the sequence is PVGIMPGSAS…RPSSTGSTQF (94 aa). A compositionally biased stretch (low complexity) spans 2310 to 2319; sequence SASTSVVTSS. Position 2412 is a phosphothreonine (Thr2412). A phosphoserine mark is found at Ser2449 and Ser2451.

It belongs to the N-CoR nuclear receptor corepressors family. Forms a large corepressor complex that contains SIN3A/B and histone deacetylases HDAC1 and HDAC2. This complex associates with the thyroid receptor (TR) and the retinoid acid receptor (RAR) in the absence of ligand. Interacts directly with RARA; the interaction is facilitated with RARA trimethylation. Component of the N-Cor repressor complex, at least composed of CBFA2T3, HEXIM1, NCOR1, NCOR2, HDAC3, TBL1X, TBL1XR1, CORO2A and GPS2. Interacts with ZBTB33; the interaction serves to recruit the N-CoR complex to promoter regions containing methylated CpG dinucleotides. Interacts with TRIM28 and KDM3A. Interacts (via the RD1 domain) with BAZ1A (via its N-terminal); the interaction corepresses a number of NCOR1-regulated genes. Interacts with BCL6, C1D, DACH1, HEXIM1, HDAC7, RORA, RORC, SAP30, SIAH2, SIN3A and SIN3B. May interact with DEAF1. Interacts with RXRA. Interacts with SETD5. Interacts with VDR. Interacts with ZBTB7A. Interacts with AR. Interacts with HDAC3. In terms of processing, ubiquitinated; mediated by SIAH2 and leading to its subsequent proteasomal degradation. As to expression, ubiquitous.

The protein localises to the nucleus. In terms of biological role, mediates transcriptional repression by certain nuclear receptors. Part of a complex which promotes histone deacetylation and the formation of repressive chromatin structures which may impede the access of basal transcription factors. Participates in the transcriptional repressor activity produced by BCL6. Recruited by ZBTB7A to the androgen response elements/ARE on target genes, negatively regulates androgen receptor signaling and androgen-induced cell proliferation. Mediates the NR1D1-dependent repression and circadian regulation of TSHB expression. The NCOR1-HDAC3 complex regulates the circadian expression of the core clock gene ARTNL/BMAL1 and the genes involved in lipid metabolism in the liver. The chain is Nuclear receptor corepressor 1 (Ncor1) from Mus musculus (Mouse).